A 922-amino-acid chain; its full sequence is Ubiquitin carboxyl-terminal hydrolase 29 (922 aa).

Residues 160–196 form a disordered region; that stretch reads GILENQGGKGQNTLSSDVQTNEDILKEDNPVPNKKYK. The segment covering 170 to 181 has biased composition (polar residues); that stretch reads QNTLSSDVQTNE. One can recognise a USP domain in the interval 285–885; the sequence is QGFPNLGNTC…SGYIFFYMHN (601 aa). The active-site Nucleophile is C294. H840 serves as the catalytic Proton acceptor.

This sequence belongs to the peptidase C19 family.

The protein resides in the cytoplasm. The protein localises to the perinuclear region. It catalyses the reaction Thiol-dependent hydrolysis of ester, thioester, amide, peptide and isopeptide bonds formed by the C-terminal Gly of ubiquitin (a 76-residue protein attached to proteins as an intracellular targeting signal).. Deubiquitinase involved in innate antiviral immunity by mediating 'Lys-48'-linked deubiquitination of CGAS, thereby promoting its stabilization. This Homo sapiens (Human) protein is Ubiquitin carboxyl-terminal hydrolase 29.